The following is a 391-amino-acid chain: S-adenosylmethionine synthase (391 aa).

His16 is an ATP binding site. Asp18 provides a ligand contact to Mg(2+). Glu44 lines the K(+) pocket. L-methionine is bound by residues Glu57 and Gln101. The flexible loop stretch occupies residues 101–111 (QSADIAQGVDA). Residues 166 to 168 (DAK), Asp244, 250 to 251 (RK), Ala267, and Lys271 each bind ATP. L-methionine is bound at residue Asp244. Lys275 serves as a coordination point for L-methionine.

This sequence belongs to the AdoMet synthase family. Homotetramer; dimer of dimers. Mg(2+) serves as cofactor. Requires K(+) as cofactor.

It localises to the cytoplasm. The catalysed reaction is L-methionine + ATP + H2O = S-adenosyl-L-methionine + phosphate + diphosphate. Its pathway is amino-acid biosynthesis; S-adenosyl-L-methionine biosynthesis; S-adenosyl-L-methionine from L-methionine: step 1/1. Its function is as follows. Catalyzes the formation of S-adenosylmethionine (AdoMet) from methionine and ATP. The overall synthetic reaction is composed of two sequential steps, AdoMet formation and the subsequent tripolyphosphate hydrolysis which occurs prior to release of AdoMet from the enzyme. This is S-adenosylmethionine synthase from Zymomonas mobilis subsp. mobilis (strain ATCC 31821 / ZM4 / CP4).